The primary structure comprises 280 residues: Feruloyl esterase 1 (280 aa).

The N-terminal stretch at 1-20 (MKAFATRALAFSVAAGQALA) is a signal peptide. 3 disulfides stabilise this stretch: Cys49–Cys278, Cys111–Cys114, and Cys247–Cys254. Asn99 carries N-linked (GlcNAc...) asparagine glycosylation. The active-site Nucleophile is Ser153. Asp214 functions as the Charge relay system in the catalytic mechanism. Residue His267 is the Charge relay system of the active site.

The protein belongs to the AB hydrolase superfamily. FaeA family. Post-translationally, glycosylated.

Its subcellular location is the secreted. The enzyme catalyses feruloyl-polysaccharide + H2O = ferulate + polysaccharide.. Its activity is regulated as follows. Metal or basic ions Mn(2+), Ni(+), Mg(2+), and NH(4)(+) decrease the activity by 4.4% to 14.1%. The enzymatic activity is inhibited by Zn(2+) at a low concentration (1 mM) but not a high concentration (5 mM). Loses about a quarter of activity by the addition of 1 mM of Cu(2+) or Fe(3+) and activity is completely suppressed when the concentration was up to 5 mM. Low concentrations (0.25 and 0.5 M) of NaCl improve the activity by 5.6 % or 8.3%, respectively. Involved in degradation of plant cell walls. Hydrolyzes the feruloyl-arabinose ester bond in arabinoxylans, and the feruloyl-galactose ester bond in pectin. The chain is Feruloyl esterase 1 from Penicillium parvum (Eupenicillium parvum).